Reading from the N-terminus, the 139-residue chain is Gastrula zinc finger protein XlCGF29.1 (139 aa).

5 consecutive C2H2-type zinc fingers follow at residues 6–28 (FTCT…LLIH), 34–56 (FDST…LSTH), 62–84 (FVCT…LHSH), 90–112 (FPCS…LRHH), and 117–139 (FPCT…QMIH).

It belongs to the krueppel C2H2-type zinc-finger protein family.

The protein localises to the nucleus. Its function is as follows. May be involved in transcriptional regulation. This is Gastrula zinc finger protein XlCGF29.1 from Xenopus laevis (African clawed frog).